The primary structure comprises 581 residues: 2-succinyl-5-enolpyruvyl-6-hydroxy-3-cyclohexene-1-carboxylate synthase (581 aa).

Belongs to the TPP enzyme family. MenD subfamily. Homodimer. The cofactor is Mg(2+). Requires Mn(2+) as cofactor. It depends on thiamine diphosphate as a cofactor.

The catalysed reaction is isochorismate + 2-oxoglutarate + H(+) = 5-enolpyruvoyl-6-hydroxy-2-succinyl-cyclohex-3-ene-1-carboxylate + CO2. The protein operates within quinol/quinone metabolism; 1,4-dihydroxy-2-naphthoate biosynthesis; 1,4-dihydroxy-2-naphthoate from chorismate: step 2/7. It functions in the pathway quinol/quinone metabolism; menaquinone biosynthesis. In terms of biological role, catalyzes the thiamine diphosphate-dependent decarboxylation of 2-oxoglutarate and the subsequent addition of the resulting succinic semialdehyde-thiamine pyrophosphate anion to isochorismate to yield 2-succinyl-5-enolpyruvyl-6-hydroxy-3-cyclohexene-1-carboxylate (SEPHCHC). The protein is 2-succinyl-5-enolpyruvyl-6-hydroxy-3-cyclohexene-1-carboxylate synthase of Chlorobium phaeobacteroides (strain BS1).